A 553-amino-acid chain; its full sequence is Transcription factor 7-like 1 (553 aa).

The segment covering 1 to 11 (MPQLNSGGGDE) has biased composition (gly residues). The segment at 1-61 (MPQLNSGGGD…SENHSSDSDS (61 aa)) is interaction with CTNNB1. Disordered stretches follow at residues 1 to 77 (MPQL…EKPR), 183 to 213 (GTPPGHLSPEIDPKTGIPRPPHPSELSPYYP), and 392 to 474 (SARD…LTTK). 2 stretches are compositionally biased toward basic and acidic residues: residues 17–32 (ELIRFKDEGEQEEKSP) and 52–77 (SENHSSDSDSEVERRPPPRETFEKPR). Residues 109-312 (LGGHYLPNGA…SPNLITKPSV (204 aa)) form an interaction with AES and TLE4 region. A DNA-binding region (HMG box) is located at residues 324-392 (IKKPLNAFML…LHSQLYPTWS (69 aa)). Over residues 407–416 (KQSPEMEITK) the composition is skewed to basic and acidic residues. The interval 408-553 (QSPEMEITKT…PLSLVTKSSD (146 aa)) is interaction with CTBP. The segment covering 444–463 (SPATPSAALASPAAPAATHS) has biased composition (low complexity). Polar residues predominate over residues 464–473 (EQAQPLSLTT).

Belongs to the TCF/LEF family. As to quaternary structure, interacts with csnk1e, ctnnb1, ctbp, dact1 and gsk3b. May interact with ase and tle4. Post-translationally, phosphorylated. Phosphorylation by csnk1e promotes binding to ctnnb1 while phosphorylation by gsk3b may reverse this effect.

It is found in the nucleus. Functionally, participates in the Wnt signaling pathway. Binds to DNA and acts as a repressor in the absence of ctnnb1, and as an activator in its presence. Required early in development for the establishment of the dorsal body axis in response to maternal Wnt signaling. The chain is Transcription factor 7-like 1 (tcf7l1) from Xenopus tropicalis (Western clawed frog).